The following is a 503-amino-acid chain: 5'-3' exonuclease PLD4 (503 aa).

Residues 1-36 (MDKKKEHPEMRIPLQTAVEVSDWPCSTSHDPHSGLG) are Cytoplasmic-facing. The chain crosses the membrane as a signal-anchor for type II membrane protein span at residues 37 to 57 (MVLGMLAVLGLSSVTLILFLW). Over 58-503 (QGATSFTSHR…RQVPSQDCVW (446 aa)) the chain is Lumenal. N-linked (GlcNAc...) asparagine glycosylation is found at Asn89, Asn148, and Asn169. An intrachain disulfide couples Cys92 to Cys248. The 28-residue stretch at 207 to 234 (TGGVLHSKFWVVDGRHIYVGSANMDWRS) folds into the PLD phosphodiesterase 1 domain. Residues His212, Lys214, and Asp219 contribute to the active site. His212 (proton donor) is an active-site residue. Residues Asn247, Asn279, Asn415, and Asn425 are each glycosylated (N-linked (GlcNAc...) asparagine). The cysteines at positions 377 and 501 are disulfide-linked. The PLD phosphodiesterase 2 domain maps to 421–447 (FSRVNHSKFMVTDKTAYVGTSNWSEDY). Catalysis depends on residues His426, Lys428, and Asp433. His426 functions as the Nucleophile in the catalytic mechanism. An N-linked (GlcNAc...) asparagine glycan is attached at Asn442.

It belongs to the phospholipase D family. Post-translationally, highly N-glycosylated. As to expression, enriched in the white matter of early postnatal brains, as well as in splenic marginal zone cells. Highly expressed in dendritic cells (DCs) and other myeloid cells, with lower expression in B cell.

It localises to the endoplasmic reticulum membrane. The protein resides in the golgi apparatus. The protein localises to the trans-Golgi network membrane. It is found in the nucleus. Its subcellular location is the early endosome. It localises to the cytoplasmic vesicle. The protein resides in the phagosome. The protein localises to the lysosome. The catalysed reaction is Exonucleolytic cleavage in the 5'- to 3'-direction to yield nucleoside 3'-phosphates.. The enzyme catalyses a 5'-end 5'-dephospho-ribonucleotidyl-ribonucleotide-RNA + H2O = a ribonucleoside 3'-phosphate + a 5'-end dephospho-ribonucleoside-RNA + H(+). It carries out the reaction a ribonucleoside 3'-phosphate-2'-3'-cyclophospho-GMP + H2O = a ribonucleoside 3'-phosphate + 2',3'-cyclophospho-GMP + H(+). It catalyses the reaction a 5'-end 5'-dephospho-2'-deoxyribonucleotidyl-2'-deoxyribonucleotide in single-stranded DNA + H2O = a 5'-end dephospho-2'-deoxyribonucleoside in single-stranded DNA + a 2'-deoxyribonucleoside 3'-phosphate + H(+). The catalysed reaction is a 5'-end 5'-phospho-2'-deoxyribonucleotide in single-stranded DNA + H2O = a 5'-end 5'-dephospho-2'-deoxyribonucleotide in single-stranded DNA + phosphate. The enzyme catalyses a 3-lyso-sn-glycero-1-phospho-(3'-acyl-1'-sn-glycerol) + a 1-acyl-sn-glycerol = a 3-acyl-sn-glycero-1-phospho-(3'-acyl-1'-sn-glycerol) + glycerol. It carries out the reaction 3-lyso-sn-glycero-1-phospho-(3'-(9Z-octadecenoyl)-1'-sn-glycerol) + 1-(9Z-octadecenoyl)-sn-glycerol = 3-(9Z-octadecenoyl)-sn-glycero-1-phospho-(3'-(9Z-octadecenoyl)-1'-sn-glycerol) + glycerol. Its activity is regulated as follows. The exonuclease activity toward ssDNA substrate is Ca(2+) and Mg(2+)-independent, but it is inhibited by Fe(2+), Cu(2+) and to a lesser extent Zn(2+) ions. In terms of biological role, 5'-&gt;3' exonuclease that hydrolyzes the phosphodiester bond of single-stranded DNA (ssDNA) and RNA molecules to form nucleoside 3'-monophosphates and 5'-end 5'-hydroxy deoxyribonucleotide/ribonucleotide fragments. Partially redundant with PLD4, can cleave all four nucleotides displaying higher efficiency for ssDNA and RNA fragments initiated with uridine and guanosine residues and lower efficiency for cytidine-initiated substrates. As a result, it does not always degrade polynucleotides to the single nucleotide level, it can stall at specific sites sparing certain fragments from exonucleolytic degradation. Processes self and pathogenic ssDNA and RNA molecules that reach the endolysosomal compartment via phagocytosis or autophagy and may serve as 'danger' signals for recognition by innate immune receptors such as toll-like receptors (TLRs). Degrades mitochondrial CpG-rich ssDNA fragments to prevent TLR9 activation and autoinflammatory response, but it can cleave viral RNA to generate ligands for TLR7 activation and initiate antiviral immune responses. In plasmacytoid dendritic cells, it cooperates with endonuclease RNASET2 to release 2',3'-cyclic guanosine monophosphate (2',3'-cGMP), a potent stimulatory ligand for TLR7. Produces 2',3'-cGMPs and cytidine-rich RNA fragments that occupy TLR7 ligand-binding pockets and trigger a signaling-competent state. Can exert polynucleotide phosphatase activity toward 5'-phosphorylated ssDNA substrates although at a slow rate. Transphosphatidylase that catalyzes the exchange with R to S stereo-inversion of the glycerol moiety between (S,R)-lysophosphatidylglycerol (LPG) and monoacylglycerol (MAG) substrates to yield (S,S)-bis(monoacylglycero)phosphate (BMP). Can synthesize a variety of (S,S)-BMPs representing the main phospholipid constituent of lysosomal intralumenal vesicle (ILV) membranes that bind acid hydrolases for lipid degradation. Regulates the homeostasis and interorganellar communication of the endolysosomal system with an overall impact on cellular removal of dysfunctional organelles via autophagy as well as proper protein and lipid turnover. May play a role in myotube formation in response to ER stress. This Mus musculus (Mouse) protein is 5'-3' exonuclease PLD4.